A 194-amino-acid polypeptide reads, in one-letter code: Ribonuclease HII (194 aa).

Positions 1-194 (MTVGVDEVGR…RLFPRDDGLR (194 aa)) constitute an RNase H type-2 domain. A divalent metal cation is bound by residues Asp-6, Glu-7, and Asp-102.

The protein belongs to the RNase HII family. Requires Mn(2+) as cofactor. Mg(2+) is required as a cofactor.

The protein resides in the cytoplasm. The catalysed reaction is Endonucleolytic cleavage to 5'-phosphomonoester.. In terms of biological role, endonuclease that specifically degrades the RNA of RNA-DNA hybrids. The protein is Ribonuclease HII of Synechococcus sp. (strain WH7803).